The primary structure comprises 333 residues: DNA-directed RNA polymerase subunit alpha (333 aa).

The segment at 1 to 233 is alpha N-terminal domain (alpha-NTD); that stretch reads MVQEKLRFST…DLFIPFLHAE (233 aa). The tract at residues 266 to 333 is alpha C-terminal domain (alpha-CTD); the sequence is KKEIALKSIF…DILKIQKYFT (68 aa).

Belongs to the RNA polymerase alpha chain family. As to quaternary structure, in plastids the minimal PEP RNA polymerase catalytic core is composed of four subunits: alpha, beta, beta', and beta''. When a (nuclear-encoded) sigma factor is associated with the core the holoenzyme is formed, which can initiate transcription.

It is found in the plastid. It localises to the chloroplast. The enzyme catalyses RNA(n) + a ribonucleoside 5'-triphosphate = RNA(n+1) + diphosphate. Functionally, DNA-dependent RNA polymerase catalyzes the transcription of DNA into RNA using the four ribonucleoside triphosphates as substrates. The polypeptide is DNA-directed RNA polymerase subunit alpha (Phaseolus angularis (Azuki bean)).